The following is a 354-amino-acid chain: Probable RNA methyltransferase AZOSEA28700 (354 aa).

Residue glutamate 88 is the Proton acceptor of the active site. Residues 91–317 (LLPRDGLCVS…TKLRHSAGQD (227 aa)) form the Radical SAM core domain. A disulfide bond links cysteine 98 and cysteine 322. Residues cysteine 105, cysteine 109, and cysteine 112 each contribute to the [4Fe-4S] cluster site. Residues 150–151 (GE), serine 180, 203–205 (SLH), and asparagine 279 each bind S-adenosyl-L-methionine. Cysteine 322 (S-methylcysteine intermediate) is an active-site residue.

This sequence belongs to the radical SAM superfamily. RlmN family. [4Fe-4S] cluster is required as a cofactor.

The protein resides in the cytoplasm. The protein is Probable RNA methyltransferase AZOSEA28700 of Aromatoleum aromaticum (strain DSM 19018 / LMG 30748 / EbN1) (Azoarcus sp. (strain EbN1)).